The chain runs to 281 residues: Ribosomal RNA small subunit methyltransferase J (281 aa).

S-adenosyl-L-methionine-binding positions include 129-130 (RD), 145-146 (ER), and Asp-199.

It belongs to the methyltransferase superfamily. RsmJ family.

The protein resides in the cytoplasm. The enzyme catalyses guanosine(1516) in 16S rRNA + S-adenosyl-L-methionine = N(2)-methylguanosine(1516) in 16S rRNA + S-adenosyl-L-homocysteine + H(+). Its function is as follows. Specifically methylates the guanosine in position 1516 of 16S rRNA. The sequence is that of Ribosomal RNA small subunit methyltransferase J from Laribacter hongkongensis (strain HLHK9).